The chain runs to 901 residues: MELQYISYFQPTSSVVALLLALVSILSSVVVLRKTFLNNYSSSPASSTKTAVLSHQRQQSCALPISGLLHIFMNKNGLIHVTLGNMADKYGPIFSFPTGSHRTLVVSSWEMVKECFTGNNDTAFSNRPIPLAFKTIFYACGGIDSYGLSSVPYGKYWRELRKVCVHNLLSNQQLLKFRHLIISQVDTSFNKLYELCKNSEDNHGNYTTTTTTAAGMVRIDDWLAELSFNVIGRIVCGFQSGPKTGAPSRVEQFKEAINEASYFMSTSPVSDNVPMLGWIDQLTGLTRNMKHCGKKLDLVVESIINDHRQKRRFSRTKGGDEKDDEQDDFIDICLSIMEQPQLPGNNNPSQIPIKSIVLDMIGGGTDTTKLTTIWTLSLLLNNPHVLDKAKQEVDAHFRTKRRSTNDAAAAVVDFDDIRNLVYIQAIIKESMRLYPASPVVERLSGEDCVVGGFHVPAGTRLWANVWKMQRDPKVWDDPLVFRPDRFLSDEQKMVDVRGQNYELLPFGAGRRVCPGVSFSLDLMQLVLTRLILEFEMKSPSGKVDMTATPGLMSYKVIPLDILLTHRRIKPCVQSAASERDMESSGVPVITLGSGKVMPVLGMGTFEKVGKGSERERLAILKAIEVGYRYFDTAAAYETEEVLGEAIAEALQLGLVKSRDELFISSMLWCTDAHADRVLLALQNSLRNLKLEYVDLYMLPFPASLKPGKITMDIPEEDICRMDYRSVWAAMEECQNLGFTKSIGVSNFSCKKLQELMATANIPPAVNQVEMSPAFQQKKLREYCNANNILVSAISVLGSNGTPWGSNAVLGSEVLKKIAMAKGKSVAQVSMRWVYEQGASLVVKSFSEERLRENLNIFDWELTKEDHEKIGEIPQCRILSAYFLVSPNGPFKSQEELWDDEA.

The chain crosses the membrane as a helical span at residues 12 to 32 (TSSVVALLLALVSILSSVVVL). Heme is bound at residue C513.

The protein in the N-terminal section; belongs to the cytochrome P450 family. In the C-terminal section; belongs to the aldo/keto reductase family. Requires heme as cofactor.

It is found in the membrane. It carries out the reaction (R)-reticuline + NADP(+) = 1,2-dehydroreticuline + NADPH + H(+). It catalyses the reaction (S)-reticuline + reduced [NADPH--hemoprotein reductase] + O2 = 1,2-dehydroreticuline + oxidized [NADPH--hemoprotein reductase] + 2 H2O + H(+). It functions in the pathway alkaloid biosynthesis; morphine biosynthesis. Its function is as follows. Bifunctional protein involved in the biosynthesis of morphinan-type benzylisoquinoline alkaloids. Required for the isomerization of (S)- to (R)-reticuline. The cytochrome P450 module is responsible for the conversion of (S)-reticuline to 1,2-dehydroreticuline while the oxidoreductase module converts 1,2-dehydroreticuline to (R)-reticuline. This chain is Bifunctional protein STORR, found in Papaver somniferum (Opium poppy).